The sequence spans 288 residues: MKVKILVDSTADVPFSWMEKYDIDSIPLYVVWEDGRSEPDEREPEEIMNFYKRIREAGSVPKTSQPSVEDFKKRYLKYKEEDYDVVLVLTLSSKLSGTYNSAVLASKEVDIPVYVVDTLLASGAIPLPARVAREMLENGATIEEVLKKLDERMKNKDFKAIFYVSNFDYLVKGGRVSKFQGFVGNLLKIRVCLHIENGELIPYRKVRGDKKAIEALIEKLREDTPEGSKLRVIGVHADNEAGVVELLNTLRKSYEVVDEIISPMGKVITTHVGPGTVGFGIEVLERKR.

Positions valine 3–valine 283 constitute a DegV domain. Residues threonine 63 and serine 96 each contribute to the hexadecanoate site.

As to quaternary structure, monomer.

Functionally, binds long-chain fatty acids, such as palmitate, and may play a role in lipid transport or fatty acid metabolism. This Thermotoga maritima (strain ATCC 43589 / DSM 3109 / JCM 10099 / NBRC 100826 / MSB8) protein is Fatty acid-binding protein TM_1468.